The following is a 1934-amino-acid chain: Pyruvate dehydrogenase [NADP(+)] (1934 aa).

2 consecutive 4Fe-4S ferredoxin-type domains span residues Ser-710–Leu-739 and Tyr-767–Leu-796. [4Fe-4S] cluster contacts are provided by Cys-719, Cys-722, Cys-725, Cys-729, Cys-776, Cys-779, Cys-782, and Cys-786. The 151-residue stretch at Met-1288–Leu-1438 folds into the Flavodoxin-like domain. An FAD-binding FR-type domain is found at Pro-1501–Pro-1759. Residues Tyr-1542–Gln-1553 and Ile-1685–Cys-1695 contribute to the FAD site.

In the N-terminal section; belongs to the pyruvate:ferredoxin/flavodoxin oxidoreductase family. As to quaternary structure, homodimer. FAD serves as cofactor. Requires FMN as cofactor. The cofactor is thiamine diphosphate.

The enzyme catalyses pyruvate + NADP(+) + CoA = acetyl-CoA + CO2 + NADPH. May have an important role in respiratory metabolism. Cryptosporidium have a relic mitochondrion with no function in energy metabolism so it is not known if PFOR has a function. This chain is Pyruvate dehydrogenase [NADP(+)] (PFOR), found in Cryptosporidium parvum.